The chain runs to 466 residues: Trigger factor (466 aa).

Residues Gly-162–Pro-243 enclose the PPIase FKBP-type domain. The tract at residues Gly-428–Thr-466 is disordered. Positions Ala-457–Thr-466 are enriched in low complexity.

Belongs to the FKBP-type PPIase family. Tig subfamily.

It is found in the cytoplasm. It carries out the reaction [protein]-peptidylproline (omega=180) = [protein]-peptidylproline (omega=0). Functionally, involved in protein export. Acts as a chaperone by maintaining the newly synthesized protein in an open conformation. Functions as a peptidyl-prolyl cis-trans isomerase. This is Trigger factor from Mycobacterium bovis (strain BCG / Tokyo 172 / ATCC 35737 / TMC 1019).